We begin with the raw amino-acid sequence, 316 residues long: Cyclin-dependent kinase inhibitor 1C (316 aa).

Position 107 is an omega-N-methylarginine (Arg107). Positions 124–153 (ESLDGLEEAPEQLPSVPVPAPASTPPPVPV) are disordered. A compositionally biased stretch (pro residues) spans 139 to 153 (VPVPAPASTPPPVPV). Repeat copies occupy residues 156–159 (PAPA), 160–163 (PAPA), 180–183 (PAPA), 184–187 (PAPA), 188–191 (PAPA), 198–201 (PAPA), 202–205 (PAPA), 206–209 (PAPA), and 210–213 (PAPA). Residues 156–213 (PAPAPAPAPVAAPVAAPVAVAVLAPAPAPAPAPAPAPAPVAAPAPAPAPAPAPAPAPA) form a 9 X 4 AA repeats of P-A-P-A region. Residues 181 to 217 (APAPAPAPAPAPAPVAAPAPAPAPAPAPAPAPAPAPD) are compositionally biased toward pro residues. The interval 181-260 (APAPAPAPAP…AAGTAAASAN (80 aa)) is disordered. Over residues 223–233 (SAEQGANQGQR) the composition is skewed to polar residues. The span at 251–260 (AAGTAAASAN) shows a compositional bias: low complexity. Phosphoserine is present on Ser268. The short motif at 278-281 (KRKR) is the Nuclear localization signal element. Positions 278-316 (KRKRSAPEKSSGDVPAPCPSPSAAPGVGSVEQTPRKRLR) are disordered.

The protein belongs to the CDI family. Interacts with PCNA. As to expression, expressed in the heart, brain, lung, skeletal muscle, kidney, pancreas and testis. Expressed in the eye. High levels are seen in the placenta while low levels are seen in the liver.

The protein resides in the nucleus. Potent tight-binding inhibitor of several G1 cyclin/CDK complexes (cyclin E-CDK2, cyclin D2-CDK4, and cyclin A-CDK2) and, to lesser extent, of the mitotic cyclin B-CDC2. Negative regulator of cell proliferation. May play a role in maintenance of the non-proliferative state throughout life. The sequence is that of Cyclin-dependent kinase inhibitor 1C (CDKN1C) from Homo sapiens (Human).